The chain runs to 330 residues: Fructose-1,6-bisphosphatase class 1 (330 aa).

The Mg(2+) site is built by Glu78, Asp97, Leu99, and Asp100. Substrate-binding positions include 100-103 (DGSS) and Asn188. Glu260 provides a ligand contact to Mg(2+).

The protein belongs to the FBPase class 1 family. As to quaternary structure, homotetramer. The cofactor is Mg(2+).

Its subcellular location is the cytoplasm. The catalysed reaction is beta-D-fructose 1,6-bisphosphate + H2O = beta-D-fructose 6-phosphate + phosphate. Its pathway is carbohydrate biosynthesis; gluconeogenesis. This is Fructose-1,6-bisphosphatase class 1 from Paracoccus denitrificans (strain Pd 1222).